We begin with the raw amino-acid sequence, 142 residues long: Truncated non-functional hemagglutinin-esterase homolog (142 aa).

Topologically, residues 1–117 (MNFTVPVQAI…ESVDVISSSY (117 aa)) are virion surface. Asparagine 2 carries an N-linked (GlcNAc...) asparagine; by host glycan. A disulfide bridge links cysteine 28 with cysteine 33. N-linked (GlcNAc...) asparagine; by host glycosylation is found at asparagine 46 and asparagine 67. Cysteine 70 and cysteine 95 are disulfide-bonded. A helical membrane pass occupies residues 118–138 (FVATWVLLVVVIILVFIIISF). Residues 139-142 (CISN) are Intravirion-facing.

It belongs to the influenza type C/coronaviruses hemagglutinin-esterase family. In terms of assembly, homodimer. Post-translationally, N-glycosylated.

The protein resides in the virion membrane. The protein localises to the host cell membrane. In Berne virus (BEV), this protein is Truncated non-functional hemagglutinin-esterase homolog (HE).